Consider the following 147-residue polypeptide: Large ribosomal subunit protein uL15 (147 aa).

The segment covering methionine 1–aspartate 11 has biased composition (basic and acidic residues). Residues methionine 1 to leucine 57 are disordered. The segment covering arginine 21–serine 35 has biased composition (gly residues).

The protein belongs to the universal ribosomal protein uL15 family. Part of the 50S ribosomal subunit.

Functionally, binds to the 23S rRNA. The polypeptide is Large ribosomal subunit protein uL15 (Halothermothrix orenii (strain H 168 / OCM 544 / DSM 9562)).